A 491-amino-acid chain; its full sequence is MSNKTLLIITDGIGHNSSNKNNAFYTAKKPTYDYLFENVPYSLIHTYGEYVGLPDMQMGNSEVGHMTIGSGRVLYQDLVKIHLAIKNDTLKDNEVLKNTISKSNNIHLLGLASDGGVHSHINHIIAMAKIAKNMGKKVFIHIITDGRDVAPNCAKTYINQILEICDEDIKIATISGRYYAMDRDNRWDRVKKAYDSITFANPKTQDDILSYIETSYKNEIFDEFIEPTSFEGYNGIEKNDGIIFCNFRSDRMREISSVFAKADFNEFDTFKGSLNFASMTQYDKNVFIPVLFPKDNPKNTLAEVISNAGLSQLHTAETEKYAHVTFFFNGGVEEPVLNESRVLIPSPQVATYDLKPEMSAPEVGSAVRTAMNNNIDFIVVNFANGDMVGHTGVFEAAVKAVEAVDFELGQIFELAKKQNYNIILTSDHGNCEMMKDDEGNILTNHTVGDVYCFVYSPKVKEVKTGSLNNIAPTVLKLMNLEIPKEMDEPLI.

The Mn(2+) site is built by D11 and S61. Catalysis depends on S61, which acts as the Phosphoserine intermediate. Substrate is bound by residues H118, R147–D148, R177, R183, R248–R251, and K320. D386, H390, D427, H428, and H445 together coordinate Mn(2+).

It belongs to the BPG-independent phosphoglycerate mutase family. As to quaternary structure, monomer. The cofactor is Mn(2+).

The catalysed reaction is (2R)-2-phosphoglycerate = (2R)-3-phosphoglycerate. It participates in carbohydrate degradation; glycolysis; pyruvate from D-glyceraldehyde 3-phosphate: step 3/5. In terms of biological role, catalyzes the interconversion of 2-phosphoglycerate and 3-phosphoglycerate. The chain is 2,3-bisphosphoglycerate-independent phosphoglycerate mutase from Aliarcobacter butzleri (strain RM4018) (Arcobacter butzleri).